A 564-amino-acid polypeptide reads, in one-letter code: Type 2 DNA topoisomerase 6 subunit B (564 aa).

ATP-binding positions include asparagine 46, aspartate 78, 99–100 (TK), 109–116 (GQQGIGIS), and lysine 471.

The protein belongs to the TOP6B family. In terms of assembly, homodimer. Heterotetramer of two Top6A and two Top6B chains.

The enzyme catalyses ATP-dependent breakage, passage and rejoining of double-stranded DNA.. In terms of biological role, relaxes both positive and negative superturns and exhibits a strong decatenase activity. The polypeptide is Type 2 DNA topoisomerase 6 subunit B (Pyrococcus horikoshii (strain ATCC 700860 / DSM 12428 / JCM 9974 / NBRC 100139 / OT-3)).